The following is a 335-amino-acid chain: Photosystem II assembly lipoprotein Ycf48 (335 aa).

Positions 1–23 (MSRLFSNLFNLLLIAAIGFGLSG) are cleaved as a signal peptide. C24 is lipidated: N-palmitoyl cysteine. C24 is lipidated: S-diacylglycerol cysteine.

It belongs to the Ycf48 family. As to quaternary structure, part of early PSII assembly complexes which includes D1 (psbA) and PsbI; not found in mature PSII. Binds to the lumenal side of PSII complexes. Interacts with YidC.

It is found in the cellular thylakoid membrane. Functionally, a factor required for optimal assembly of photosystem II (PSII), acting in the early stages of PSII assembly. Also plays a role in replacement of photodamaged D1 (psbA). Assists YidC in synthesis of chlorophyll-binding proteins. The sequence is that of Photosystem II assembly lipoprotein Ycf48 from Prochlorococcus marinus (strain MIT 9313).